We begin with the raw amino-acid sequence, 259 residues long: Steroidogenic acute regulatory-like protein 1 (259 aa).

Residues 1 to 20 (MTLLPFTCLILLYSLGSVMS) form the signal peptide. The 212-residue stretch at 43-254 (YATALKTCGE…NRRHFQNLKA (212 aa)) folds into the START domain.

This is Steroidogenic acute regulatory-like protein 1 (strl-1) from Caenorhabditis elegans.